We begin with the raw amino-acid sequence, 146 residues long: Hemoglobin subunit beta (146 aa).

V1 is subject to N-acetylvaline. In terms of domain architecture, Globin spans 2–146 (HMTDAEKKLV…VANALAHKYH (145 aa)). At T12 the chain carries Phosphothreonine. Position 59 is an N6-acetyllysine (K59). H63 is a binding site for heme b. K82 is subject to N6-acetyllysine. H92 contacts heme b. S-nitrosocysteine is present on C93. K144 carries the post-translational modification N6-acetyllysine.

The protein belongs to the globin family. In terms of assembly, tetramer of two alpha and two different beta chains. Two external cysteine residues at beta-16 and beta-52 cause reversible polymerization to octamers and most likely irreversible formation of higher polymers. In terms of tissue distribution, red blood cells.

Functionally, involved in oxygen transport from the lung to the various peripheral tissues. This chain is Hemoglobin subunit beta (HBB), found in Echinops telfairi (Lesser hedgehog tenrec).